The following is a 122-amino-acid chain: Cysteine proteinase inhibitor 5 (122 aa).

The N-terminal stretch at 1-26 (MTSKVVFLLLLSLVVVLLPLYASAAA) is a signal peptide. The Cystatin domain occupies 29 to 117 (GGWSPISNVT…RNLTSFEPAN (89 aa)). The N-linked (GlcNAc...) asparagine glycan is linked to Asn-36. The Secondary area of contact signature appears at 72 to 76 (QVVSG). N-linked (GlcNAc...) asparagine glycosylation is present at Asn-109.

This sequence belongs to the cystatin family. Phytocystatin subfamily.

It localises to the secreted. In terms of biological role, specific inhibitor of cysteine proteinases. Probably involved in the regulation of endogenous processes and in defense against pests and pathogens. The sequence is that of Cysteine proteinase inhibitor 5 (CYS5) from Arabidopsis thaliana (Mouse-ear cress).